Reading from the N-terminus, the 105-residue chain is Urease subunit beta (105 aa).

This sequence belongs to the urease beta subunit family. In terms of assembly, heterotrimer of UreA (gamma), UreB (beta) and UreC (alpha) subunits. Three heterotrimers associate to form the active enzyme.

The protein localises to the cytoplasm. The enzyme catalyses urea + 2 H2O + H(+) = hydrogencarbonate + 2 NH4(+). It participates in nitrogen metabolism; urea degradation; CO(2) and NH(3) from urea (urease route): step 1/1. The sequence is that of Urease subunit beta from Pseudomonas putida (strain GB-1).